Reading from the N-terminus, the 364-residue chain is uncharacterized protein (364 aa).

The next 3 helical transmembrane spans lie at 41-61, 298-318, and 329-349; these read NIFTHIFLFLLIIVSGLFFGL, VIYILLFLIIDSLILLVITYM, and LLFYIFGLLSFNPIVWASIII.

The protein resides in the membrane. This is an uncharacterized protein from Mycoplasma capricolum subsp. capricolum (strain California kid / ATCC 27343 / NCTC 10154).